We begin with the raw amino-acid sequence, 612 residues long: Probable translation initiation factor IF-2 (612 aa).

Residues 11 to 229 enclose the tr-type G domain; sequence LRQPIVVVLG…VLAGLTQRYL (219 aa). The G1 stretch occupies residues 20–27; the sequence is GHVDHGKT. 20 to 27 contributes to the GTP binding site; it reads GHVDHGKT. A G2 region spans residues 45–49; the sequence is LITQH. The segment at 84 to 87 is G3; that stretch reads DTPG. GTP is bound by residues 84–88 and 138–141; these read DTPGH and NKID. The segment at 138–141 is G4; that stretch reads NKID. The G5 stretch occupies residues 207–209; the sequence is SAK.

The protein belongs to the TRAFAC class translation factor GTPase superfamily. Classic translation factor GTPase family. IF-2 subfamily.

Its function is as follows. Function in general translation initiation by promoting the binding of the formylmethionine-tRNA to ribosomes. Seems to function along with eIF-2. In Hyperthermus butylicus (strain DSM 5456 / JCM 9403 / PLM1-5), this protein is Probable translation initiation factor IF-2.